A 294-amino-acid chain; its full sequence is Cytosolic Fe-S cluster assembly factor CFD1 (294 aa).

Position 25 to 32 (Gly25 to Ser32) interacts with ATP. 2 residues coordinate [4Fe-4S] cluster: Cys214 and Cys217.

It belongs to the Mrp/NBP35 ATP-binding proteins family. NUBP2/CFD1 subfamily. In terms of assembly, heterotetramer of 2 NBP35 and 2 CFD1 chains. [4Fe-4S] cluster serves as cofactor.

Its subcellular location is the cytoplasm. Functionally, component of the cytosolic iron-sulfur (Fe/S) protein assembly (CIA) machinery. Required for maturation of extramitochondrial Fe-S proteins. The NBP35-CFD1 heterotetramer forms a Fe-S scaffold complex, mediating the de novo assembly of an Fe-S cluster and its transfer to target apoproteins. Required for biogenesis and export of both ribosomal subunits, which may reflect a role in assembly of the Fe/S clusters in RLI1, a protein which performs rRNA processing and ribosome export. The polypeptide is Cytosolic Fe-S cluster assembly factor CFD1 (Candida albicans (strain SC5314 / ATCC MYA-2876) (Yeast)).